We begin with the raw amino-acid sequence, 124 residues long: Small ribosomal subunit protein uS12 (124 aa).

The residue at position 89 (aspartate 89) is a 3-methylthioaspartic acid.

This sequence belongs to the universal ribosomal protein uS12 family. In terms of assembly, part of the 30S ribosomal subunit. Contacts proteins S8 and S17. May interact with IF1 in the 30S initiation complex.

In terms of biological role, with S4 and S5 plays an important role in translational accuracy. Functionally, interacts with and stabilizes bases of the 16S rRNA that are involved in tRNA selection in the A site and with the mRNA backbone. Located at the interface of the 30S and 50S subunits, it traverses the body of the 30S subunit contacting proteins on the other side and probably holding the rRNA structure together. The combined cluster of proteins S8, S12 and S17 appears to hold together the shoulder and platform of the 30S subunit. The polypeptide is Small ribosomal subunit protein uS12 (Aeromonas hydrophila subsp. hydrophila (strain ATCC 7966 / DSM 30187 / BCRC 13018 / CCUG 14551 / JCM 1027 / KCTC 2358 / NCIMB 9240 / NCTC 8049)).